The sequence spans 279 residues: Movement protein (279 aa).

The segment at 246-279 (SESEELNVESPPAAIGSSSASRSEAFRPQVVNGL) is disordered. Over residues 254-268 (ESPPAAIGSSSASRS) the composition is skewed to low complexity.

Belongs to the cucumovirus movement protein family.

Its subcellular location is the host cell junction. It localises to the host plasmodesma. Its function is as follows. Transports viral genome to neighboring plant cells directly through plasmosdesmata, without any budding. The movement protein allows efficient cell to cell propagation, by bypassing the host cell wall barrier. Acts by forming a tubular structure at the host plasmodesmata, enlarging it enough to allow free passage of virion capsids. In Cucumber mosaic virus (strain CS) (CMV), this protein is Movement protein.